A 250-amino-acid polypeptide reads, in one-letter code: Urease accessory protein UreD (250 aa).

It belongs to the UreD family. In terms of assembly, ureD, UreF and UreG form a complex that acts as a GTP-hydrolysis-dependent molecular chaperone, activating the urease apoprotein by helping to assemble the nickel containing metallocenter of UreC. The UreE protein probably delivers the nickel.

It localises to the cytoplasm. Its function is as follows. Required for maturation of urease via the functional incorporation of the urease nickel metallocenter. The sequence is that of Urease accessory protein UreD from Aliarcobacter butzleri (strain RM4018) (Arcobacter butzleri).